We begin with the raw amino-acid sequence, 215 residues long: Large ribosomal subunit protein uL3 (215 aa).

A disordered region spans residues 136–155 (GVSISHRSHGSTGQRQDPGK). Gln-151 bears the N5-methylglutamine mark.

It belongs to the universal ribosomal protein uL3 family. As to quaternary structure, part of the 50S ribosomal subunit. Forms a cluster with proteins L14 and L19. Post-translationally, methylated by PrmB.

One of the primary rRNA binding proteins, it binds directly near the 3'-end of the 23S rRNA, where it nucleates assembly of the 50S subunit. The protein is Large ribosomal subunit protein uL3 of Rickettsia africae (strain ESF-5).